Here is a 274-residue protein sequence, read N- to C-terminus: Large ribosomal subunit protein uL2 (274 aa).

Positions 224 to 259 are disordered; that stretch reads AMNPVDHPHGGGEGRTSGGRHPVTPWGIPTKGYKTR.

The protein belongs to the universal ribosomal protein uL2 family. In terms of assembly, part of the 50S ribosomal subunit. Forms a bridge to the 30S subunit in the 70S ribosome.

One of the primary rRNA binding proteins. Required for association of the 30S and 50S subunits to form the 70S ribosome, for tRNA binding and peptide bond formation. It has been suggested to have peptidyltransferase activity; this is somewhat controversial. Makes several contacts with the 16S rRNA in the 70S ribosome. This chain is Large ribosomal subunit protein uL2, found in Citrifermentans bemidjiense (strain ATCC BAA-1014 / DSM 16622 / JCM 12645 / Bem) (Geobacter bemidjiensis).